The following is a 423-amino-acid chain: UPF0229 protein PLES_05841 (423 aa).

The tract at residues Ala-84–Gly-107 is disordered. Positions Ser-92–Lys-102 are enriched in gly residues.

This sequence belongs to the UPF0229 family.

The polypeptide is UPF0229 protein PLES_05841 (Pseudomonas aeruginosa (strain LESB58)).